The sequence spans 125 residues: Neuraminyllactose-binding hemagglutinin (125 aa).

Residues 92 to 97 form an N-acetyl-neuraminyl-alpha(2,3)-lactose binding motif region; the sequence is KRTIQK.

Its subcellular location is the cell outer membrane. This Helicobacter pylori (Campylobacter pylori) protein is Neuraminyllactose-binding hemagglutinin (hpaA).